The chain runs to 269 residues: Phosphate import ATP-binding protein PstB (269 aa).

The ABC transporter domain maps to 23–264 (IATRNLEFYY…PSKQQTEDYI (242 aa)). ATP is bound at residue 55–62 (GPSGCGKS).

Belongs to the ABC transporter superfamily. Phosphate importer (TC 3.A.1.7) family. As to quaternary structure, the complex is composed of two ATP-binding proteins (PstB), two transmembrane proteins (PstC and PstA) and a solute-binding protein (PstS).

It localises to the cell inner membrane. The enzyme catalyses phosphate(out) + ATP + H2O = ADP + 2 phosphate(in) + H(+). In terms of biological role, part of the ABC transporter complex PstSACB involved in phosphate import. Responsible for energy coupling to the transport system. The protein is Phosphate import ATP-binding protein PstB of Xylella fastidiosa (strain Temecula1 / ATCC 700964).